A 162-amino-acid chain; its full sequence is Phosphopantetheine adenylyltransferase (162 aa).

A substrate-binding site is contributed by S11. Residues 11 to 12 (SF) and H19 contribute to the ATP site. Residues K43, V76, and R90 each coordinate substrate. Residues 91–93 (GLR), E101, and 126–132 (HLYISSS) each bind ATP.

Belongs to the bacterial CoaD family. As to quaternary structure, homohexamer. Mg(2+) is required as a cofactor.

The protein localises to the cytoplasm. It carries out the reaction (R)-4'-phosphopantetheine + ATP + H(+) = 3'-dephospho-CoA + diphosphate. Its pathway is cofactor biosynthesis; coenzyme A biosynthesis; CoA from (R)-pantothenate: step 4/5. Functionally, reversibly transfers an adenylyl group from ATP to 4'-phosphopantetheine, yielding dephospho-CoA (dPCoA) and pyrophosphate. The polypeptide is Phosphopantetheine adenylyltransferase (Streptococcus pneumoniae (strain JJA)).